The following is a 208-amino-acid chain: Receptor expression-enhancing protein 6 (208 aa).

Helical transmembrane passes span 49–69 (GAFL…GFVY), 93–113 (WVIY…LHWF), and 115–135 (FYYV…SWNG). The disordered stretch occupies residues 187–208 (VGPAESEPRSLPSSAHTEPTVD). A compositionally biased stretch (polar residues) spans 197 to 208 (LPSSAHTEPTVD).

The protein belongs to the DP1 family.

It is found in the endoplasmic reticulum membrane. It localises to the cytoplasmic vesicle. The protein localises to the clathrin-coated vesicle membrane. In terms of biological role, required correct function and survival of retinal photoreceptors. Required for retinal development. In rod photoreceptors, facilitates stability and/or trafficking of guanylate cyclases and is required to maintain endoplasmic reticulum and mitochondrial homeostasis. May play a role in clathrin-coated intracellular vesicle trafficking of proteins from the endoplasmic reticulum to the retinal rod plasma membrane. This chain is Receptor expression-enhancing protein 6, found in Danio rerio (Zebrafish).